A 343-amino-acid chain; its full sequence is Uroporphyrinogen decarboxylase (343 aa).

Substrate contacts are provided by residues 26-30, aspartate 75, tyrosine 150, serine 205, and histidine 319; that span reads RQAGR.

It belongs to the uroporphyrinogen decarboxylase family. In terms of assembly, homodimer.

It localises to the cytoplasm. It catalyses the reaction uroporphyrinogen III + 4 H(+) = coproporphyrinogen III + 4 CO2. It functions in the pathway porphyrin-containing compound metabolism; protoporphyrin-IX biosynthesis; coproporphyrinogen-III from 5-aminolevulinate: step 4/4. Catalyzes the decarboxylation of four acetate groups of uroporphyrinogen-III to yield coproporphyrinogen-III. The sequence is that of Uroporphyrinogen decarboxylase from Syntrophotalea carbinolica (strain DSM 2380 / NBRC 103641 / GraBd1) (Pelobacter carbinolicus).